The following is a 179-amino-acid chain: MFRASLLCCLVLLAGVWADNKYDSESGDDCPTLPTSLPHMLHELRAAFSRVKTFFQMKDQLDNMLLDGSLLEDFKGYLGCQALSEMIQFYLEEVMPQAENHSTDQEKDKVNSLGEKLKTLRVRLRRCHRFLPCENKSKAVEQVKSAFSKLQEKGVYKAMSEFDIFINYIEAYMTTKMKN.

The signal sequence occupies residues 1–18; sequence MFRASLLCCLVLLAGVWA. 2 cysteine pairs are disulfide-bonded: Cys-30–Cys-127 and Cys-80–Cys-133. 2 N-linked (GlcNAc...) asparagine; by host glycosylation sites follow: Asn-100 and Asn-135.

Belongs to the IL-10 family.

Its subcellular location is the secreted. In terms of biological role, down-regulates the expression of the TAP1 gene (transporter associated with antigen processing), thereby affecting the transport of peptides into the endoplasmic reticulum and subsequent peptide loading by MHC class I molecules. In consequence, infected cells are masked for immune recognition by cytotoxic T-lymphocytes. This chain is Viral interleukin-10 homolog, found in Equus caballus (Horse).